A 506-amino-acid chain; its full sequence is MAFLLSFLILAFLITIIFFLSSSSTKKVQENTTYGPPSYPLIGSILSFNKNRHRLLQWYTELLRLSPSQTILVPLLGNRRTIITTNPLNVEYILKTNFFNFPKGKPFTDLLGDLLGGGIFNVDGHSWSSQRKLASHEFSTRSLRSFAFEVLKDEVENRLVPVLSTAADVGTTVDLQDVLKRFAFDVVCKVSLGWDPDCLDLTRPVNPLVEAFDTAAEISARRATEPIYAVWKTKRVLNVGSERKLREAIRTVHVLVSEIVRAKKKSLEIGTGAEAKQDLLSRFLAAGHNGEAVRDMVISFIMAGRDTTSAAMTWLFWLLTENDDVERKILEEVDPLVSLGLGFEDLKEMAYTKACLCEAMRLYPPVSWDSKHAANDDVLPDGTRVKRGDKVTYFPYGMGRMETLWGTDSEEFNPNRWFDSEPGSTRPVLKPISPYKFPVFQAGPRVCVGKEMAFMQMKYVVGSVLSRFEIVPVNKDRPVFVPLLTAHMAGGLKVKIKRRSHILNNV.

A helical transmembrane segment spans residues 2–22 (AFLLSFLILAFLITIIFFLSS). Cysteine 447 lines the heme pocket.

Belongs to the cytochrome P450 family. Heme is required as a cofactor.

The protein resides in the membrane. It localises to the endoplasmic reticulum membrane. The enzyme catalyses a jasmonyl-L-amino acid + reduced [NADPH--hemoprotein reductase] + O2 = a 12-hydroxyjasmonyl-L-alpha-amino acid + oxidized [NADPH--hemoprotein reductase] + H2O + H(+). It catalyses the reaction L-isoleucine-(+)-7-isojasmonate + NADPH + O2 + H(+) = L-isoleucine-(+)-12-hydroxy-7-isojasmonate + NADP(+) + H2O. It carries out the reaction a jasmonyl-L-isoleucinate + NADPH + O2 + H(+) = L-isoleucine-12-hydroxyjasmonate + NADP(+) + H2O. Hydroxylase involved in the oxidation of the plant hormone jasmonoyl-L-isoleucine (JA-Ile), a bioactive phytohormone of the jasmonate-mediated signaling pathway. Converts JA-Ile to 12-hydroxy-JA-Ile. Exerts negative feedback control on JA-Ile levels and plays a key role in attenuation of jasmonate responses. Negatively regulates the expression of wound-induced genes TIFY11A/JAZ5, TIFY5A/JAZ8 and TIFY5A/JAZ10. Catalyzes the hydroxylation of jasmonoyl-L-valine (JA-Val), jasmonoyl-L-leucine (JA-Leu) and jasmonoyl-L-phenylalanine (JA-Phe) in vitro. Converts JA-Val, JA-Leu and JA-Phe to 12-hydroxy-JA-Val, 12-hydroxy-JA-Leu and 12-hydroxy-JA-Phe, respectively. The protein is Cytochrome P450 94B3 of Arabidopsis thaliana (Mouse-ear cress).